The sequence spans 183 residues: Large ribosomal subunit protein uL6 (183 aa).

Belongs to the universal ribosomal protein uL6 family. In terms of assembly, part of the 50S ribosomal subunit.

Functionally, this protein binds to the 23S rRNA, and is important in its secondary structure. It is located near the subunit interface in the base of the L7/L12 stalk, and near the tRNA binding site of the peptidyltransferase center. In Ruminiclostridium cellulolyticum (strain ATCC 35319 / DSM 5812 / JCM 6584 / H10) (Clostridium cellulolyticum), this protein is Large ribosomal subunit protein uL6.